A 313-amino-acid chain; its full sequence is Acetyl-coenzyme A carboxylase carboxyl transferase subunit beta (313 aa).

Positions 24 to 293 (LWIKCPDSGQ…LETASKSVQP (270 aa)) constitute a CoA carboxyltransferase N-terminal domain.

The protein belongs to the AccD/PCCB family. As to quaternary structure, acetyl-CoA carboxylase is a heterohexamer composed of biotin carboxyl carrier protein (AccB), biotin carboxylase (AccC) and two subunits each of ACCase subunit alpha (AccA) and ACCase subunit beta (AccD).

Its subcellular location is the cytoplasm. It catalyses the reaction N(6)-carboxybiotinyl-L-lysyl-[protein] + acetyl-CoA = N(6)-biotinyl-L-lysyl-[protein] + malonyl-CoA. Its pathway is lipid metabolism; malonyl-CoA biosynthesis; malonyl-CoA from acetyl-CoA: step 1/1. Component of the acetyl coenzyme A carboxylase (ACC) complex. Biotin carboxylase (BC) catalyzes the carboxylation of biotin on its carrier protein (BCCP) and then the CO(2) group is transferred by the transcarboxylase to acetyl-CoA to form malonyl-CoA. The sequence is that of Acetyl-coenzyme A carboxylase carboxyl transferase subunit beta from Bradyrhizobium diazoefficiens (strain JCM 10833 / BCRC 13528 / IAM 13628 / NBRC 14792 / USDA 110).